The following is a 271-amino-acid chain: Ribosomal RNA small subunit methyltransferase A (271 aa).

Residues Asn-19, Leu-21, Gly-46, Glu-67, Asp-92, and Asn-113 each contribute to the S-adenosyl-L-methionine site.

Belongs to the class I-like SAM-binding methyltransferase superfamily. rRNA adenine N(6)-methyltransferase family. RsmA subfamily.

The protein localises to the cytoplasm. It catalyses the reaction adenosine(1518)/adenosine(1519) in 16S rRNA + 4 S-adenosyl-L-methionine = N(6)-dimethyladenosine(1518)/N(6)-dimethyladenosine(1519) in 16S rRNA + 4 S-adenosyl-L-homocysteine + 4 H(+). Specifically dimethylates two adjacent adenosines (A1518 and A1519) in the loop of a conserved hairpin near the 3'-end of 16S rRNA in the 30S particle. May play a critical role in biogenesis of 30S subunits. This Photobacterium profundum (strain SS9) protein is Ribosomal RNA small subunit methyltransferase A.